The following is a 321-amino-acid chain: Peroxidase 5 (321 aa).

An N-terminal signal peptide occupies residues 1 to 24 (MERFSLRFVLMMVSIILTSSICQA). Glutamine 25 bears the Pyrrolidone carboxylic acid mark. Intrachain disulfides connect cysteine 35–cysteine 115, cysteine 68–cysteine 73, cysteine 121–cysteine 317, and cysteine 201–cysteine 227. The active-site Proton acceptor is the histidine 66. Positions 67, 70, 72, 74, and 76 each coordinate Ca(2+). A substrate-binding site is contributed by proline 164. Histidine 194 contacts heme b. Threonine 195 serves as a coordination point for Ca(2+). Asparagine 211 carries N-linked (GlcNAc...) asparagine glycosylation. Ca(2+) contacts are provided by aspartate 240, threonine 243, and aspartate 248. An N-linked (GlcNAc...) asparagine glycan is attached at asparagine 285.

It belongs to the peroxidase family. Classical plant (class III) peroxidase subfamily. Heme b is required as a cofactor. The cofactor is Ca(2+).

The protein resides in the secreted. The catalysed reaction is 2 a phenolic donor + H2O2 = 2 a phenolic radical donor + 2 H2O. Removal of H(2)O(2), oxidation of toxic reductants, biosynthesis and degradation of lignin, suberization, auxin catabolism, response to environmental stresses such as wounding, pathogen attack and oxidative stress. These functions might be dependent on each isozyme/isoform in each plant tissue. The chain is Peroxidase 5 (PER5) from Arabidopsis thaliana (Mouse-ear cress).